The primary structure comprises 167 residues: Ubiquitin-fold modifier-conjugating enzyme 1 (167 aa).

Catalysis depends on Cys116, which acts as the Glycyl thioester intermediate. Lys122 participates in a covalent cross-link: Glycyl lysine isopeptide (Lys-Gly) (interchain with G-Cter in UFM1).

It belongs to the ubiquitin-conjugating enzyme family. UFC1 subfamily. Interacts with UBA5 (via C-terminus). Interacts with UFL1. Interacts with UFM1. Interacts with KIRREL3. Ufmylated at Lys-122. Deufmylated by UFSP1.

E2-like enzyme which specifically catalyzes the second step in ufmylation. Accepts the ubiquitin-like modifier UFM1 from the E1 enzyme UBA5 and forms an intermediate with UFM1 via a thioester linkage. Ufmylation is involved in various processes, such as ribosome recycling, response to DNA damage, interferon response or reticulophagy (also called ER-phagy). This is Ubiquitin-fold modifier-conjugating enzyme 1 from Bos taurus (Bovine).